Here is a 92-residue protein sequence, read N- to C-terminus: Small ribosomal subunit protein uS19c (92 aa).

The protein belongs to the universal ribosomal protein uS19 family.

It localises to the plastid. Its subcellular location is the chloroplast. Its function is as follows. Protein S19 forms a complex with S13 that binds strongly to the 16S ribosomal RNA. This Nandina domestica (Heavenly bamboo) protein is Small ribosomal subunit protein uS19c.